The chain runs to 894 residues: MQKLTAAQIRETFLSFFIRHGHTHVPSSSLVVADDPTLLFANSGMVQFKDVFLGREQRPYSRAVTAQKCLRVSGKHNDLEEVGPSPRHHTFFEMLGNFSFGDYFKAEAIALAWKLLTEEFKLPVERLWFTVFAGDDEVPPDDEAAALWIAQGADPSRVLRFGRKDNFWVMGDTGPCGPCSEITMYIGDDLSQMRAEGVNSDDPNYVEIWNNVFMQYDRATMQPLPRPSVDTGMGLERMAMVMQGVHSTYETDLFVAIINQIIKTRGSDEEHYHAHRSAYRAIADHARAIAFLIADGVLPGNLGRSYVLRRILRRAAYQGRTIGFERPFLADVITSVIEQMGEAYPELVKRRELILSAADQEERQFLRTLSGGLTRLQGVIEQVRARGEQVIPGNDAFVLKDTYGFPLDLTQKIAAEQGLTVDEAGYEAAMAEQRARSRAAAASKRGGEADLWADLDLPASHFTGYERLSDRATVIGMLGDGDALTSADTGRSVQIVLDTTPFYAESGGQIGDTGLLVGPEGSVQIEDTRRPLPGLIVHYGRVVNGRISVGDQVQATVDVVRRADIQRNHTATHMLQRALRDVLGEHAAQAGSLVAPDRLRFDFTHTKAVDPEELREVEQRLNKWVRADTTVRWEITGYQDAMARGAIALFGEKYGDTVRLVTIERGQTLAEGEFASRDSLELCGGTHVNHTGEIGFVRIVSEGSIGSGIRRIEALTGRGAEGWVEQQAQTLRELAARINTQPAQLLERIDALLAEHRQRKQELEALRSKLAREQLDLLLGRVQHVAGVPLLAAEVEADSVDRLREMGEYLRDKLGNAVIVLGAQINGKPQLLTIVTPDLVRRGLNAVQLVKPLAALVGGGGGGRPEIAQAGGRHPDKLAAAIGAAVEVLAGQAG.

The Zn(2+) site is built by H569, H573, C683, and H687.

This sequence belongs to the class-II aminoacyl-tRNA synthetase family. The cofactor is Zn(2+).

It is found in the cytoplasm. It catalyses the reaction tRNA(Ala) + L-alanine + ATP = L-alanyl-tRNA(Ala) + AMP + diphosphate. In terms of biological role, catalyzes the attachment of alanine to tRNA(Ala) in a two-step reaction: alanine is first activated by ATP to form Ala-AMP and then transferred to the acceptor end of tRNA(Ala). Also edits incorrectly charged Ser-tRNA(Ala) and Gly-tRNA(Ala) via its editing domain. The chain is Alanine--tRNA ligase from Chloroflexus aurantiacus (strain ATCC 29366 / DSM 635 / J-10-fl).